The sequence spans 1011 residues: Retinoblastoma-related protein (1011 aa).

The interval 1-22 is disordered; sequence MSQASVDMEDVKPSISLPSDDG. The tract at residues 411–612 is domain A; that stretch reads TPVSTAMTTA…ERGSSMYNSL (202 aa). The tract at residues 411-860 is pocket; the sequence is TPVSTAMTTA…NEVFIPSVKP (450 aa). The interval 613 to 729 is spacer; sequence IVARPTLAAE…PAGGGETCAE (117 aa). The domain B stretch occupies residues 730 to 860; it reads TGINIFFNKI…NEVFIPSVKP (131 aa). The interval 872–903 is disordered; that stretch reads QKSKSSPEDSNNADSQIPGSPRLSPFPNLPDM. Over residues 873–889 the composition is skewed to polar residues; it reads KSKSSPEDSNNADSQIP.

This sequence belongs to the retinoblastoma protein (RB) family.

Its subcellular location is the nucleus. Regulator of biological processes that recruits a histone deacetylase to control gene transcription. May play a role in the entry into mitosis, negatively regulating the cell proliferation. Formation of stable complexes with geminiviridae replication-associated proteins may create a cellular environment which favors viral DNA replication. The polypeptide is Retinoblastoma-related protein (Rb1) (Cocos nucifera (Coconut palm)).